Reading from the N-terminus, the 26-residue chain is Turripeptide OL57 (26 aa).

Contains 2 disulfide bonds. Expressed by the venom duct.

It localises to the secreted. Functionally, acts as a neurotoxin by inhibiting an ion channel. This chain is Turripeptide OL57, found in Iotyrris olangoensis (Sea snail).